We begin with the raw amino-acid sequence, 1690 residues long: Lysine-specific demethylase 5A (1690 aa).

Residues 19 to 60 enclose the JmjN domain; that stretch reads CPVFEPSWEEFTDPLSFIGRIRPLAEKTGICKIRPPKDWQPP. The 91-residue stretch at 84–174 folds into the ARID domain; it reads TRVRLDFLDQ…ILYPYELFQS (91 aa). Residue lysine 191 forms a Glycyl lysine isopeptide (Lys-Gly) (interchain with G-Cter in SUMO2) linkage. Serine 204 carries the phosphoserine modification. Residues 293 to 343 form a PHD-type 1 zinc finger; the sequence is LYVCMFCGRGNNEDKLLLCDGCDDSYHTFCLIPPLPDVPKGDWRCPKCVAE. Tyrosine 409 is a binding site for 2-oxoglutarate. The short motif at 419–423 is the GSGFP motif element; the sequence is GSGFP. Positions 437-603 constitute a JmjC domain; that stretch reads EYALSGWNLN…IGRQCVNHYR (167 aa). Fe cation is bound by residues histidine 483 and glutamate 485. 2-oxoglutarate is bound by residues serine 491, asparagine 493, and lysine 501. A Fe cation-binding site is contributed by histidine 571. The C5HC2 zinc finger occupies 676–728; it reads CSACRTTCFLSALTCSCNPERLVCLYHPTDLCPCPMQKKCLRYRYPLEDLPSL. Lysine 1007 participates in a covalent cross-link: Glycyl lysine isopeptide (Lys-Gly) (interchain with G-Cter in SUMO2). At serine 1111 the chain carries Phosphoserine. Residues 1161-1218 form a PHD-type 2 zinc finger; the sequence is VKFCICRKTASGFMLQCELCKDWFHNSCVPLPKSSSQKKGSSWQAKEVKFLCPLCMRS. Disordered stretches follow at residues 1327–1348 and 1407–1433; these read SVSS…SDED and KSCS…LEPP. Phosphoserine occurs at positions 1330 and 1331. Positions 1337–1348 are enriched in acidic residues; sequence DYDDEETDSDED. Threonine 1343 carries the phosphothreonine modification. Position 1345 is a phosphoserine (serine 1345). Phosphoserine is present on residues serine 1438 and serine 1488. Basic and acidic residues-rich tracts occupy residues 1490-1503 and 1520-1530; these read EEKP…DSSE and GKQKSKELKKM. Disordered regions lie at residues 1490–1509 and 1516–1543; these read EEKP…RKRK and LFGE…LGAD. Tyrosine 1595 is subject to Phosphotyrosine. 2 positions are modified to phosphoserine: serine 1598 and serine 1603. The PHD-type 3 zinc-finger motif lies at 1607-1661; sequence NAVCAAQNCQRPCKDKVDWVQCDGGCDEWFHQVCVGVSPEMAENEDYICINCAKK. Residues 1623–1690 are interaction with LMO2; the sequence is VDWVQCDGGC…LPMEDLKETS (68 aa). A Phosphoserine modification is found at serine 1666.

Belongs to the JARID1 histone demethylase family. In terms of assembly, interacts with SUZ12; the interaction is direct. Interacts with the viral protein-binding domain of RB1. Interacts with ESR1, MYC, MYCN and LMO2. Interacts with HDAC1; this interaction impairs histone deacetylation by HDAC1. Interacts with BMAL1 and CLOCK. Interacts (via PHD-type 1 zinc finger) with histone H3 unmodified at 'Lys-4' and (via PHD-type 3 zinc finger) with histone H3 di- and trimethylated at 'Lys-4'. Fe(2+) serves as cofactor.

Its subcellular location is the nucleus. The protein localises to the nucleolus. The enzyme catalyses N(6),N(6),N(6)-trimethyl-L-lysyl(4)-[histone H3] + 3 2-oxoglutarate + 3 O2 = L-lysyl(4)-[histone H3] + 3 formaldehyde + 3 succinate + 3 CO2. The inhibitors KDOAM-25, CPI-455 and others inhibits its demethylase activity, resulting to cell growth arrest in cancer cells. Functionally, histone demethylase that specifically demethylates 'Lys-4' of histone H3, thereby playing a central role in histone code. Does not demethylate histone H3 'Lys-9', H3 'Lys-27', H3 'Lys-36', H3 'Lys-79' or H4 'Lys-20'. Demethylates trimethylated and dimethylated but not monomethylated H3 'Lys-4'. Regulates specific gene transcription through DNA-binding on 5'-CCGCCC-3' motif. May stimulate transcription mediated by nuclear receptors. Involved in transcriptional regulation of Hox proteins during cell differentiation. May participate in transcriptional repression of cytokines such as CXCL12. Plays a role in the regulation of the circadian rhythm and in maintaining the normal periodicity of the circadian clock. In a histone demethylase-independent manner, acts as a coactivator of the CLOCK-BMAL1-mediated transcriptional activation of PER1/2 and other clock-controlled genes and increases histone acetylation at PER1/2 promoters by inhibiting the activity of HDAC1. Seems to act as a transcriptional corepressor for some genes such as MT1F and to favor the proliferation of cancer cells. In Homo sapiens (Human), this protein is Lysine-specific demethylase 5A.